A 338-amino-acid polypeptide reads, in one-letter code: Ketol-acid reductoisomerase (NADP(+)) (338 aa).

One can recognise a KARI N-terminal Rossmann domain in the interval 3-183; that stretch reads IDVFYDDDAD…GGARAGVIPT (181 aa). Residues 26-29, arginine 49, serine 52, serine 54, and 84-87 contribute to the NADP(+) site; these read YGSQ and DTSQ. Histidine 109 is an active-site residue. Glycine 135 provides a ligand contact to NADP(+). Residues 184 to 329 form the KARI C-terminal knotted domain; it reads TFEAETVTDL…AKLRDLMSWV (146 aa). Residues aspartate 192, glutamate 196, glutamate 228, and glutamate 232 each contribute to the Mg(2+) site. Serine 253 serves as a coordination point for substrate.

The protein belongs to the ketol-acid reductoisomerase family. It depends on Mg(2+) as a cofactor.

The enzyme catalyses (2R)-2,3-dihydroxy-3-methylbutanoate + NADP(+) = (2S)-2-acetolactate + NADPH + H(+). It catalyses the reaction (2R,3R)-2,3-dihydroxy-3-methylpentanoate + NADP(+) = (S)-2-ethyl-2-hydroxy-3-oxobutanoate + NADPH + H(+). It participates in amino-acid biosynthesis; L-isoleucine biosynthesis; L-isoleucine from 2-oxobutanoate: step 2/4. It functions in the pathway amino-acid biosynthesis; L-valine biosynthesis; L-valine from pyruvate: step 2/4. Its function is as follows. Involved in the biosynthesis of branched-chain amino acids (BCAA). Catalyzes an alkyl-migration followed by a ketol-acid reduction of (S)-2-acetolactate (S2AL) to yield (R)-2,3-dihydroxy-isovalerate. In the isomerase reaction, S2AL is rearranged via a Mg-dependent methyl migration to produce 3-hydroxy-3-methyl-2-ketobutyrate (HMKB). In the reductase reaction, this 2-ketoacid undergoes a metal-dependent reduction by NADPH to yield (R)-2,3-dihydroxy-isovalerate. This Corynebacterium jeikeium (strain K411) protein is Ketol-acid reductoisomerase (NADP(+)).